Reading from the N-terminus, the 2443-residue chain is Non-reducing polyketide synthase olcA (2443 aa).

In terms of domain architecture, Ketosynthase family 3 (KS3) spans Ile-5 to Ser-442. Catalysis depends on for beta-ketoacyl synthase activity residues Cys-178, His-317, and His-362. The tract at residues Gly-550–Leu-885 is malonyl-CoA:ACP transacylase (MAT) domain. Ser-645 acts as the For acyl/malonyl transferase activity in catalysis. The tract at residues Asn-940 to Ala-1070 is N-terminal hotdog fold. One can recognise a PKS/mFAS DH domain in the interval Asn-940–Asp-1231. The product template (PT) domain stretch occupies residues Ala-989–Arg-1497. The interval Met-1085–Asp-1231 is C-terminal hotdog fold. A methyltransferase (CMeT) domain region spans residues Asn-1771–Pro-2159. Residues Glu-2359–Leu-2434 enclose the Carrier domain. At Ser-2394 the chain carries O-(pantetheine 4'-phosphoryl)serine.

It carries out the reaction nicotinyl-CoA + 2 malonyl-CoA + H(+) = 4-hydroxy-6-(pyridin-3-yl)-2H-pyran-2-one + 2 CO2 + 3 CoA. The protein operates within secondary metabolite biosynthesis; terpenoid biosynthesis. Its function is as follows. Non-reducing polyketide synthase; part of the gene cluster that mediates the biosynthesis of 15-deoxyoxalicine B. The first step of the pathway is the synthesis of nicotinyl-CoA from nicotinic acid by the nicotinic acid-CoA ligase olcI. Nicotinyl-CoA is then a substrate of polyketide synthase olcA to produce 4-hydroxy-6-(3-pyridinyl)-2H-pyran-2-one (HPPO) which is further prenylated by the polyprenyl transferase olcH to yield geranylgeranyl-HPPO. Geranylgeranyl pyrophosphate is provided by the cluster-specific geranylgeranyl pyrophosphate synthase olcC. The FAD-dependent monooxygenase olcE catalyzes the epoxidation of geranylgeranyl-HPPO and the terpene cyclase olcD catalyzes the cyclization of the terpenoid component, resulting in the formation of the tricyclic terpene moiety seen in predecaturin E. The cytochrome P450 monooxygenase then catalyzes the allylic oxidation of predecaturin E, which is followed by spirocylization with concomitant loss of one molecule of water to form decaturin E. Decaturin E is the substrate of the cytochrome P450 monooxygenase olcJ which hydroxylates it at the C-29 position to form decaturin F. The short-chain dehydrogenase/reductase olcF may catalyze the oxidation of decaturin F to generate the 29-hydroxyl-27-one intermediate, and subsequent hemiacetal formation probably leads to the formation of decaturin C. The dioxygenase olcK may be a peroxisomal enzyme that catalyzes the hydroxylation of decaturin C into decaturin A once decaturin C is shuttled into the peroxisome by the MFS transporter olcL. Finally the cytochrome P450 monooxygenase olcB catalyzes the oxidative rearrangement to yield 15-deoxyoxalicine B. In the absence of olcJ, decaturin E may be shunted to a pathway in which it is oxidized to a ketone, possibly by olcF, to form decaturin D, which undergoes further allylic oxidation to yield decaturin G. Moreover, in the absence of oclK or oclL, oclB can convert decaturin C into 15-deoxyoxalicine A. In Penicillium canescens, this protein is Non-reducing polyketide synthase olcA.